The chain runs to 679 residues: Methionine--tRNA ligase (679 aa).

The 'HIGH' region signature appears at 15-25; that stretch reads PYANGPVHIGH. Zn(2+) is bound by residues Cys147, Cys150, Cys160, and Cys163. A 'KMSKS' region motif is present at residues 332-336; it reads KISTS. Thr335 is an ATP binding site. The tRNA-binding domain maps to 578-679; it reads DFMKLDIRVG…KEVKPGSEVK (102 aa).

It belongs to the class-I aminoacyl-tRNA synthetase family. MetG type 1 subfamily. As to quaternary structure, homodimer. It depends on Zn(2+) as a cofactor.

The protein localises to the cytoplasm. The enzyme catalyses tRNA(Met) + L-methionine + ATP = L-methionyl-tRNA(Met) + AMP + diphosphate. Functionally, is required not only for elongation of protein synthesis but also for the initiation of all mRNA translation through initiator tRNA(fMet) aminoacylation. In Parabacteroides distasonis (strain ATCC 8503 / DSM 20701 / CIP 104284 / JCM 5825 / NCTC 11152), this protein is Methionine--tRNA ligase.